We begin with the raw amino-acid sequence, 57 residues long: Probable mRNA interferase HicA 1 (57 aa).

This sequence belongs to the HicA mRNA interferase family. In terms of assembly, probably forms a complex with the cognate antitoxin HicB 1 which inhibits the mRNA interferase activity.

Functionally, toxic component of a type II toxin-antitoxin (TA) system. A probable translation-independent mRNA interferase. The polypeptide is Probable mRNA interferase HicA 1 (hicA1) (Photorhabdus laumondii subsp. laumondii (strain DSM 15139 / CIP 105565 / TT01) (Photorhabdus luminescens subsp. laumondii)).